Consider the following 672-residue polypeptide: SHC SH2 domain-binding protein 1 (672 aa).

N-acetylalanine is present on A2. S5 carries the post-translational modification Phosphoserine. A Phosphothreonine modification is found at T7. Phosphoserine occurs at positions 31, 42, 44, 47, and 273. 5 PbH1 repeats span residues 428–451 (GADI…LIVH), 452–473 (RGKT…TVRT), 474–496 (SAEF…EIYP), 497–518 (GSQC…LIKD), and 526–548 (IPKI…VLVK). S634 is subject to Phosphoserine.

In terms of assembly, interacts directly with isoform p52shc of SHC1 via its SH2 domain. Interacts with TRIM71; leading to enhanced SHCBP1 protein stability. Interacts with both members of the centralspindlin complex, KIF23 and RACGAP1.

It is found in the midbody. It localises to the cytoplasm. The protein resides in the cytoskeleton. The protein localises to the spindle. In terms of biological role, may play a role in signaling pathways governing cellular proliferation, cell growth and differentiation. May be a component of a novel signaling pathway downstream of Shc. Acts as a positive regulator of FGF signaling in neural progenitor cells. This chain is SHC SH2 domain-binding protein 1 (SHCBP1), found in Homo sapiens (Human).